Here is an 81-residue protein sequence, read N- to C-terminus: Small ribosomal subunit protein bS16 (81 aa).

This sequence belongs to the bacterial ribosomal protein bS16 family.

The sequence is that of Small ribosomal subunit protein bS16 from Treponema denticola (strain ATCC 35405 / DSM 14222 / CIP 103919 / JCM 8153 / KCTC 15104).